Consider the following 666-residue polypeptide: N-acetylgalactosaminyltransferase 6 (666 aa).

Topologically, residues 1-11 (MRRPNLKWIVK) are cytoplasmic. Residues 12-31 (ASLLLLISLTLFVLITSWIS) traverse the membrane as a helical; Signal-anchor for type II membrane protein segment. Residues 32 to 666 (STPYTNKPVH…NYSQDLVLSL (635 aa)) lie on the Lumenal side of the membrane. The segment at 90 to 126 (EPVEEEVDNPHPADDEPQQQPQEELQMAAPADASVKK) is disordered. The segment covering 107-120 (QQQPQEELQMAAPA) has biased composition (low complexity). N-linked (GlcNAc...) asparagine glycosylation occurs at N181. Disulfide bonds link C192/C421, C412/C491, C531/C548, C577/C594, and C621/C636. The segment at 201 to 311 (LPTVSVIIIF…YNWLPPLLEP (111 aa)) is catalytic subdomain A. Substrate-binding residues include D242 and R272. An N-linked (GlcNAc...) asparagine glycan is attached at N285. Position 295 (D295) interacts with Mn(2+). S296 is a binding site for substrate. H297 lines the Mn(2+) pocket. A catalytic subdomain B region spans residues 367–429 (PFKSPIMAGG…PCSRIGHIYR (63 aa)). Residue W398 participates in substrate binding. H426 serves as a coordination point for Mn(2+). Position 429 (R429) interacts with substrate. The region spanning 518-648 (AMGALQNVGN…DNRFQQWNFG (131 aa)) is the Ricin B-type lectin domain. N-linked (GlcNAc...) asparagine glycosylation is found at N651 and N657.

It belongs to the glycosyltransferase 2 family. GalNAc-T subfamily. Mn(2+) serves as cofactor. Expressed during oogenesis, in the somatically derived follicle cells that surround the developing oocyte, which are involved in the maturation of the oocyte and construction of the egg shell, as well as playing a role in subsequent embryonic pattern formation. Expressed in the salivary glands from embryonic stage 12 onwards, becoming stronger at stage 13. During embryonic stages 12-13, also expressed in the posterior midgut and hindgut. During embryonic stages 14-15, expression continues in the hindgut. Expression is detected in the epidermis and antennomaxillary complex during embryonic stages 16-17. In third instar larvae, ubiquitously expressed in wing, eye-antennal, leg and haltere imaginal disks.

It localises to the golgi apparatus membrane. It catalyses the reaction L-seryl-[protein] + UDP-N-acetyl-alpha-D-galactosamine = a 3-O-[N-acetyl-alpha-D-galactosaminyl]-L-seryl-[protein] + UDP + H(+). The catalysed reaction is L-threonyl-[protein] + UDP-N-acetyl-alpha-D-galactosamine = a 3-O-[N-acetyl-alpha-D-galactosaminyl]-L-threonyl-[protein] + UDP + H(+). The protein operates within protein modification; protein glycosylation. Glycopeptide transferase involved in O-linked oligosaccharide biosynthesis, which catalyzes the transfer of an N-acetyl-D-galactosamine residue to an already glycosylated peptide. In contrast to other proteins of the family, it does not act as a peptide transferase that transfers GalNAc onto serine or threonine residue on the protein receptor, but instead requires the prior addition of a GalNAc on a peptide before adding additional GalNAc moieties. Some peptide transferase activity is however not excluded, considering that its appropriate peptide substrate may remain unidentified. Prefers the diglycosylated Muc5AC-3/13 as substrate. Might have a role in protein O-glycosylation in the Golgi and thereby in establishing and/or maintaining a proper secretory apparatus structure. The polypeptide is N-acetylgalactosaminyltransferase 6 (Drosophila melanogaster (Fruit fly)).